A 117-amino-acid chain; its full sequence is Large ribosomal subunit protein bL20c (117 aa).

It belongs to the bacterial ribosomal protein bL20 family.

It localises to the plastid. The protein resides in the chloroplast. Functionally, binds directly to 23S ribosomal RNA and is necessary for the in vitro assembly process of the 50S ribosomal subunit. It is not involved in the protein synthesizing functions of that subunit. This is Large ribosomal subunit protein bL20c from Thalassiosira pseudonana (Marine diatom).